Consider the following 476-residue polypeptide: Adenosylhomocysteinase (476 aa).

Substrate-binding residues include Thr-65, Asp-140, and Glu-201. NAD(+) is bound at residue 202-204 (TTT). Lys-231 and Asp-235 together coordinate substrate. Residues Asn-236, 265–270 (GYGDVG), Glu-288, Asn-323, 344–346 (IGH), and Asn-392 each bind NAD(+).

This sequence belongs to the adenosylhomocysteinase family. It depends on NAD(+) as a cofactor.

The protein resides in the cytoplasm. It catalyses the reaction S-adenosyl-L-homocysteine + H2O = L-homocysteine + adenosine. Its pathway is amino-acid biosynthesis; L-homocysteine biosynthesis; L-homocysteine from S-adenosyl-L-homocysteine: step 1/1. Functionally, may play a key role in the regulation of the intracellular concentration of adenosylhomocysteine. This chain is Adenosylhomocysteinase, found in Bacteroides thetaiotaomicron (strain ATCC 29148 / DSM 2079 / JCM 5827 / CCUG 10774 / NCTC 10582 / VPI-5482 / E50).